A 159-amino-acid polypeptide reads, in one-letter code: 2-C-methyl-D-erythritol 2,4-cyclodiphosphate synthase (159 aa).

The a divalent metal cation site is built by Asp8 and His10. 4-CDP-2-C-methyl-D-erythritol 2-phosphate-binding positions include 8–10 and 34–35; these read DVH and HS. Residue His42 coordinates a divalent metal cation. 4-CDP-2-C-methyl-D-erythritol 2-phosphate contacts are provided by residues 56-58, 61-65, 100-106, 132-135, Phe139, and Arg142; these read DIG, FPDTD, AQAPKML, and TTTE.

It belongs to the IspF family. Homotrimer. It depends on a divalent metal cation as a cofactor.

It carries out the reaction 4-CDP-2-C-methyl-D-erythritol 2-phosphate = 2-C-methyl-D-erythritol 2,4-cyclic diphosphate + CMP. It participates in isoprenoid biosynthesis; isopentenyl diphosphate biosynthesis via DXP pathway; isopentenyl diphosphate from 1-deoxy-D-xylulose 5-phosphate: step 4/6. Involved in the biosynthesis of isopentenyl diphosphate (IPP) and dimethylallyl diphosphate (DMAPP), two major building blocks of isoprenoid compounds. Catalyzes the conversion of 4-diphosphocytidyl-2-C-methyl-D-erythritol 2-phosphate (CDP-ME2P) to 2-C-methyl-D-erythritol 2,4-cyclodiphosphate (ME-CPP) with a corresponding release of cytidine 5-monophosphate (CMP). This chain is 2-C-methyl-D-erythritol 2,4-cyclodiphosphate synthase, found in Klebsiella pneumoniae (strain 342).